Here is a 387-residue protein sequence, read N- to C-terminus: Sorting nexin-7 (387 aa).

The PX domain maps to 30–151 (KDLFITVDAP…VFLTAQAEEL (122 aa)). Arginine 73, glutamine 75, lysine 103, and arginine 117 together coordinate a 1,2-diacyl-sn-glycero-3-phospho-(1D-myo-inositol-3-phosphate). In terms of domain architecture, BAR spans 178-387 (GVKNRPEEFM…PSEEDSEEKL (210 aa)).

The protein belongs to the sorting nexin family. In terms of assembly, heterodimer; heterodimerizes with SNX4.

It localises to the early endosome membrane. Involved in the regulation of endocytosis and in several stages of intracellular trafficking. Together with SNX4, involved in autophagosome assembly by regulating trafficking and recycling of phospholipid scramblase ATG9A. The sequence is that of Sorting nexin-7 from Mus musculus (Mouse).